Here is a 1598-residue protein sequence, read N- to C-terminus: Structural maintenance of chromosomes flexible hinge domain-containing protein GMI1 (1598 aa).

Positions 1191–1218 (VTSAPTSEREESGYSTPHSKTTPPPESG) are disordered. Coiled-coil stretches lie at residues 1258–1301 (TEDL…ASLE) and 1565–1595 (EEMMTEENRSLRRLVKKLKKANEKYQNFTAM).

Highly expressed in closed buds and open flowers. Expressed at low levels in roots, stems, cauline leaves and siliques. Expressed in the region of the shoot and floral meristems.

It is found in the nucleus. In terms of biological role, contributes to DNA double-strand break (DSB) repair via somatic homologous recombination. Functions downstream of ATM. The chain is Structural maintenance of chromosomes flexible hinge domain-containing protein GMI1 from Arabidopsis thaliana (Mouse-ear cress).